Here is a 421-residue protein sequence, read N- to C-terminus: Granaticin polyketide putative beta-ketoacyl synthase 1 (421 aa).

One can recognise a Ketosynthase family 3 (KS3) domain in the interval 2 to 416 (TRRVVITGVG…GFQSAMVLHR (415 aa)). Catalysis depends on for beta-ketoacyl synthase activity residues Cys169, His309, and His346.

Belongs to the thiolase-like superfamily. Beta-ketoacyl-ACP synthases family.

The protein operates within antibiotic biosynthesis; granaticin biosynthesis. This is Granaticin polyketide putative beta-ketoacyl synthase 1 (gra-orf1) from Streptomyces violaceoruber.